The sequence spans 436 residues: Arginine-hydroxylase NDUFAF5, mitochondrial (436 aa).

The N-terminal 25 residues, 1-25, are a transit peptide targeting the mitochondrion; it reads MLRTTFRKGFNLKCFSKDWNQTRQY. The disordered stretch occupies residues 365-436; it reads VTLSQQQQQQ…DEINKNKDDK (72 aa). The span at 369-380 shows a compositional bias: low complexity; it reads QQQQQQGIEPQQ. Composition is skewed to basic and acidic residues over residues 391-411 and 421-436; these read PKTD…HFEK and QNKE…KDDK.

It belongs to the methyltransferase superfamily.

The protein localises to the mitochondrion. Involved in the assembly of mitochondrial NADH:ubiquinone oxidoreductase complex (complex I, MT-ND1) at early stages. Probably acts as an arginine hydroxylase. May also have methyltransferase activity. This is Arginine-hydroxylase NDUFAF5, mitochondrial from Dictyostelium discoideum (Social amoeba).